The sequence spans 269 residues: 3'(2'),5'-bisphosphate nucleotidase CysQ (269 aa).

Residues glutamate 69, aspartate 89, leucine 91, aspartate 92, and aspartate 216 each coordinate Mg(2+). Substrate is bound at residue glutamate 69. Residues 91–94 and aspartate 216 each bind substrate; that span reads LDGT.

The protein belongs to the inositol monophosphatase superfamily. CysQ family. Requires Mg(2+) as cofactor.

The protein localises to the cell inner membrane. It catalyses the reaction adenosine 3',5'-bisphosphate + H2O = AMP + phosphate. In terms of biological role, converts adenosine-3',5'-bisphosphate (PAP) to AMP. The sequence is that of 3'(2'),5'-bisphosphate nucleotidase CysQ from Aggregatibacter actinomycetemcomitans (Actinobacillus actinomycetemcomitans).